The sequence spans 151 residues: Neuroglobin (151 aa).

One can recognise a Globin domain in the interval 1–149; it reads MERPEPELIR…VVQAMSRGWD (149 aa). Residues His-64 and His-96 each contribute to the heme b site.

Belongs to the globin family. Monomer. Homodimer and homotetramer; disulfide-linked. Mainly monomeric but also detected as part of homodimers and homotetramers. Interacts with 14-3-3 proteins; regulates the phosphorylation of NGB. Could interact (ferrous form) with G-alpha(i) proteins (GTP-bound form). Post-translationally, phosphorylated during hypoxia by ERK1/ERK2. Phosphorylation regulates the heme pocket hexacoordination preventing the association of His-64 with the heme metal center. Thereby, promotes the access of dioxygen and nitrite to the heme and stimulates the nitrite reductase activity. Phosphorylation during hypoxia is stabilized by 14-3-3 proteins.

It is found in the cytoplasm. It localises to the cytosol. Its subcellular location is the mitochondrion matrix. It catalyses the reaction Fe(III)-heme b-[protein] + nitric oxide + H2O = Fe(II)-heme b-[protein] + nitrite + 2 H(+). Its function is as follows. Monomeric globin with a bis-histidyl six-coordinate heme-iron atom through which it can bind dioxygen, carbon monoxide and nitric oxide. Could help transport oxygen and increase its availability to the metabolically active neuronal tissues, though its low quantity in tissues as well as its high affinity for dioxygen, which may limit its oxygen-releasing ability, argue against it. The ferrous/deoxygenated form exhibits a nitrite reductase activity and it could produce nitric oxide which in turn inhibits cellular respiration in response to hypoxia. In its ferrous/deoxygenated state, it may also exhibit GDI (Guanine nucleotide Dissociation Inhibitor) activity toward heterotrimeric G-alpha proteins, thereby regulating signal transduction to facilitate neuroprotective responses in the wake of hypoxia and associated oxidative stress. The polypeptide is Neuroglobin (Macaca mulatta (Rhesus macaque)).